Consider the following 625-residue polypeptide: Sphingomyelin phosphodiesterase (625 aa).

The tract at residues 1 to 20 is disordered; it reads MPRHGVSPGQGLPRSGREQA. Positions 1-40 are cleaved as a signal peptide; sequence MPRHGVSPGQGLPRSGREQASDRSLGAPCLRLLWLGLALA. The 85-residue stretch at 81 to 165 folds into the Saposin B-type domain; it reads WNLTCPTCKG…LLGSSCGHWD (85 aa). Asparagine 82 is a glycosylation site (N-linked (GlcNAc...) asparagine). Disulfide bonds link cysteine 85/cysteine 161, cysteine 88/cysteine 153, and cysteine 116/cysteine 127. An N-linked (GlcNAc...) asparagine glycan is attached at asparagine 171. Positions 202 and 204 each coordinate Zn(2+). 2 cysteine pairs are disulfide-bonded: cysteine 217–cysteine 222 and cysteine 223–cysteine 246. 2 residues coordinate Zn(2+): aspartate 274 and asparagine 314. N-linked (GlcNAc...) asparagine glycans are attached at residues asparagine 331 and asparagine 391. Cysteine 381 and cysteine 427 form a disulfide bridge. Residues histidine 421, histidine 453, and histidine 455 each coordinate Zn(2+). Residue asparagine 499 is glycosylated (N-linked (GlcNAc...) asparagine). Serine 504 is subject to Phosphoserine. Asparagine 516 carries an N-linked (GlcNAc...) asparagine glycan. Disulfide bonds link cysteine 580-cysteine 584 and cysteine 590-cysteine 603.

The protein belongs to the acid sphingomyelinase family. In terms of assembly, monomer. Interacts with SORT1; the interaction is required for SMPD1 targeting to lysosomes. It depends on Zn(2+) as a cofactor. Proteolytically processed. Mature lysosomal form arises from C-terminal proteolytic processing of pro-sphingomyelin phosphodiesterase. In terms of processing, both lysosomal and secreted forms are glycosylated but they show a differential pattern of glycosylation. Post-translationally, phosphorylated at Ser-504 by PRKCD upon stress stimuli. Phosphorylation is required for secretion. This form is generated following cleavage by CASP7 in the extracellular milieu. It shows increased activity.

It is found in the lysosome. It localises to the lipid droplet. Its subcellular location is the secreted. The protein localises to the extracellular space. The enzyme catalyses a sphingomyelin + H2O = phosphocholine + an N-acylsphing-4-enine + H(+). It carries out the reaction N-(octadecanoyl)-sphing-4-enine-1-phosphocholine + H2O = N-octadecanoylsphing-4-enine + phosphocholine + H(+). It catalyses the reaction a 1,2-diacyl-sn-glycero-3-phosphocholine + H2O = phosphocholine + a 1,2-diacyl-sn-glycerol + H(+). The catalysed reaction is 1,2-dihexadecanoyl-sn-glycero-3-phosphocholine + H2O = 1,2-dihexadecanoyl-sn-glycerol + phosphocholine + H(+). Its activity is regulated as follows. Hydrolysis of liposomal sphingomyelin is stimulated by incorporation of diacylglycerol (DAG), ceramide and free fatty acids into the liposomal membranes. Phosphatidylcholine hydrolysis is inhibited by incorporation of cholesterol, ceramide, DAG, monoacylglycerol and fatty acids. In terms of biological role, converts sphingomyelin to ceramide. Exists as two enzymatic forms that arise from alternative trafficking of a single protein precursor, one that is targeted to the endolysosomal compartment, whereas the other is released extracellularly. However, in response to various forms of stress, lysosomal exocytosis may represent a major source of the secretory form. In the lysosomes, converts sphingomyelin to ceramide. Plays an important role in the export of cholesterol from the intraendolysosomal membranes. Also has phospholipase C activities toward 1,2-diacylglycerolphosphocholine and 1,2-diacylglycerolphosphoglycerol. Modulates stress-induced apoptosis through the production of ceramide. Its function is as follows. When secreted, modulates cell signaling with its ability to reorganize the plasma membrane by converting sphingomyelin to ceramide. Secreted form is increased in response to stress and inflammatory mediators such as IL1B, IFNG or TNF as well as upon infection with bacteria and viruses. Produces the release of ceramide in the outer leaflet of the plasma membrane playing a central role in host defense. Ceramide reorganizes these rafts into larger signaling platforms that are required to internalize bacteria, induce apoptosis and regulate the cytokine response in infected cells. In wounded cells, the lysosomal form is released extracellularly in the presence of Ca(2+) and promotes endocytosis and plasma membrane repair. Functionally, this form is generated following cleavage by CASP7 in the extracellular milieu in response to bacterial infection. It shows increased ability to convert sphingomyelin to ceramide and promotes plasma membrane repair. Plasma membrane repair by ceramide counteracts the action of gasdermin-D (GSDMD) perforin (PRF1) pores that are formed in response to bacterial infection. This chain is Sphingomyelin phosphodiesterase (SMPD1), found in Bos taurus (Bovine).